The chain runs to 298 residues: Protease HtpX homolog (298 aa).

2 consecutive transmembrane segments (helical) span residues 14 to 34 (VVLL…AGYL) and 39 to 59 (YAMG…SMIF). Histidine 143 contacts Zn(2+). Glutamate 144 is a catalytic residue. Histidine 147 is a Zn(2+) binding site. 2 consecutive transmembrane segments (helical) span residues 158–178 (IAVA…RMLW) and 197–217 (IITL…ASLI). Glutamate 226 serves as a coordination point for Zn(2+).

This sequence belongs to the peptidase M48B family. It depends on Zn(2+) as a cofactor.

It is found in the cell membrane. This chain is Protease HtpX homolog, found in Streptococcus pyogenes serotype M6 (strain ATCC BAA-946 / MGAS10394).